Here is a 362-residue protein sequence, read N- to C-terminus: L-asparaginase 2-1 (362 aa).

The signal sequence occupies residues 1–25 (MRSLNTLLLSLFVAMSSGAPLLKIR). A glycan (N-linked (GlcNAc...) asparagine) is linked at N29. The 327-residue stretch at 33 to 359 (PSIKIFGTGG…DQIRSVFSGV (327 aa)) folds into the Asparaginase/glutaminase domain. The active-site O-isoaspartyl threonine intermediate is the T43. Residue S89 coordinates substrate. A glycan (N-linked (GlcNAc...) asparagine) is linked at N93. 122–123 (TD) contacts substrate. An N-linked (GlcNAc...) asparagine glycan is attached at N239.

The protein belongs to the asparaginase 1 family.

It localises to the secreted. It is found in the periplasm. The catalysed reaction is L-asparagine + H2O = L-aspartate + NH4(+). This chain is L-asparaginase 2-1 (ASP3-1), found in Saccharomyces cerevisiae (strain ATCC 204508 / S288c) (Baker's yeast).